The following is a 789-amino-acid chain: Endonuclease MutS2 (789 aa).

Residue 334-341 (GPNTGGKT) participates in ATP binding. Residues 690–714 (PEKDIQQSGTGKIMKSKTGDTKSEV) are disordered. The region spanning 714-789 (VDVRGKNLEE…GMGVTIVELK (76 aa)) is the Smr domain.

It belongs to the DNA mismatch repair MutS family. MutS2 subfamily. In terms of assembly, homodimer. Binds to stalled ribosomes, contacting rRNA.

Endonuclease that is involved in the suppression of homologous recombination and thus may have a key role in the control of bacterial genetic diversity. In terms of biological role, acts as a ribosome collision sensor, splitting the ribosome into its 2 subunits. Detects stalled/collided 70S ribosomes which it binds and splits by an ATP-hydrolysis driven conformational change. Acts upstream of the ribosome quality control system (RQC), a ribosome-associated complex that mediates the extraction of incompletely synthesized nascent chains from stalled ribosomes and their subsequent degradation. Probably generates substrates for RQC. This Alkaliphilus metalliredigens (strain QYMF) protein is Endonuclease MutS2.